Consider the following 2595-residue polypeptide: Glucosylceramide transporter ABCA12 (2595 aa).

A helical membrane pass occupies residues 23–43; that stretch reads PLWTLVLILWPVIIFIILAIT. Residues Asn-156, Asn-174, Asn-214, Asn-275, Asn-333, Asn-367, Asn-383, Asn-412, Asn-435, Asn-528, Asn-543, Asn-577, Asn-608, Asn-623, Asn-648, Asn-752, Asn-826, Asn-920, and Asn-963 are each glycosylated (N-linked (GlcNAc...) asparagine). Transmembrane regions (helical) follow at residues 1065-1085, 1112-1132, and 1145-1165; these read VSYS…AAFV, FAWL…LIII, and FILF…SYLI. Asn-1170 carries N-linked (GlcNAc...) asparagine glycosylation. 3 consecutive transmembrane segments (helical) span residues 1174 to 1194, 1200 to 1220, and 1250 to 1270; these read IAAL…IVLV, LSYV…SYAS, and FGWL…IAWY. The ABC transporter 1 domain occupies 1346–1577; sequence VALHGVTKIY…FGDGYHLTLT (232 aa). Residue 1378–1385 coordinates ATP; it reads GPNGAGKT. N-linked (GlcNAc...) asparagine glycosylation is found at Asn-1524, Asn-1663, and Asn-1704. Residues 1747 to 1767 traverse the membrane as a helical segment; that stretch reads LIAQVILPIVFVTTAMGLGTL. N-linked (GlcNAc...) asparagine glycans are attached at residues Asn-1769, Asn-1819, Asn-1835, Asn-1876, Asn-1921, and Asn-1952. Helical transmembrane passes span 1979-1999, 2035-2055, 2072-2092, and 2103-2123; these read ATIS…GYSV, FIYD…IIAI, LLLL…AGLF, and VCVN…VYFL. Asn-2178 carries N-linked (GlcNAc...) asparagine glycosylation. A helical transmembrane segment spans residues 2187–2207; sequence GAMFVALVSQGTMFFSLRLLI. N-linked (GlcNAc...) asparagine glycosylation is found at Asn-2208 and Asn-2223. Residues 2254-2489 enclose the ABC transporter 2 domain; sequence VQLYCLTKTY…FGRGFTVKVH (236 aa). A helical transmembrane segment spans residues 2270-2290; sequence IIAVNNISIGIPAGECFGLLG. Position 2290-2297 (2290-2297) interacts with ATP; that stretch reads GVNGAGKT. 3 N-linked (GlcNAc...) asparagine glycosylation sites follow: Asn-2318, Asn-2542, and Asn-2547. The disordered stretch occupies residues 2571 to 2595; the sequence is SYETADTSSQGSTISVDSQDDQMES. Residues 2574 to 2587 show a composition bias toward polar residues; it reads TADTSSQGSTISVD.

It belongs to the ABC transporter superfamily. ABCA family. Interacts with NR1H2 and ABCA1; this interaction is required for ABCA1 localization to the cell surface and is necessary for its normal activity and stability. Mainly expressed in the stomach, placenta, testis and fetal brain. Expressed in the upper epidermal layers, mainly the granular layers, of skin. Expressed throughout the normal interfollicular epidermis with prominent expression in the stratum granulosum. Expressed in alpha and beta cells of pancreatic islets.

The protein resides in the cytoplasmic vesicle. The protein localises to the secretory vesicle membrane. Its subcellular location is the golgi apparatus membrane. The catalysed reaction is ATP + H2O + phospholipidSide 1 = ADP + phosphate + phospholipidSide 2.. It carries out the reaction a beta-D-glucosylceramide(in) + ATP + H2O = a beta-D-glucosylceramide(out) + ADP + phosphate + H(+). In terms of biological role, transports lipids such as glucosylceramides from the outer to the inner leaflet of lamellar granules (LGs) membrane, whereby the lipids are finally transported to the keratinocyte periphery via the trans-Golgi network and LGs and released to the apical surface of the granular keratinocytes to form lipid lamellae in the stratum corneum of the epidermis, which is essential for skin barrier function. In the meantime, participates in the transport of the lamellar granules-associated proteolytic enzymes, in turn regulates desquamation and keratinocyte differentiation. Furthermore, is essential for the regulation of cellular cholesterol homeostasis by regulating ABCA1-dependent cholesterol efflux from macrophages through interaction with NR1H2 and ABCA1. Plays pleiotropic roles in regulating glucose stimulated insulin secretion from beta cells, regulating the morphology and fusion of insulin granules, lipid raft abundance and the actin cytoskeleton. Also involved in lung surfactant biogenesis. The polypeptide is Glucosylceramide transporter ABCA12 (Homo sapiens (Human)).